We begin with the raw amino-acid sequence, 74 residues long: Cecropin-P3 (74 aa).

The first 13 residues, 1–13, serve as a signal peptide directing secretion; sequence MFLIYLLVQTAES. A propeptide spans 45–74 (removed in mature form); that stretch reads RRRSVGEEDAIPSHIEVNKFFLRKPAKEHI.

This sequence belongs to the cecropin family. In terms of tissue distribution, expressed in the body wall, intestine, uterus and ovary.

It is found in the secreted. Has antibacterial activity against several Gram-positive and Gram-negative bacteria. Is weakly active against yeasts. Acts by a nonpore mechanism. In Ascaris suum (Pig roundworm), this protein is Cecropin-P3 (ASCEC-3).